Consider the following 113-residue polypeptide: MSSLQKRPGPGNSSQPTERPRKESILDLSRYQDQRIQATFTGGRQITGILKGFDQLMNLVLDDVEEQLRNPEDGKLTGAIRKLGLVVVRGTTLVLIAPMDGSEEIPNPFVQAE.

Positions 1-17 are enriched in polar residues; that stretch reads MSSLQKRPGPGNSSQPT. Residues 1-23 are disordered; sequence MSSLQKRPGPGNSSQPTERPRKE. The 80-residue stretch at 23–102 folds into the Sm domain; it reads ESILDLSRYQ…LVLIAPMDGS (80 aa).

The protein belongs to the snRNP Sm proteins family. As to quaternary structure, component of the heptameric LSM1-LSM7 complex that forms a seven-membered ring structure with a donut shape. The LSm subunits are arranged in the order lsm1, lsm2, lsm3, lsm6, lsm5, lsm7 and lsm4. Component of the heptameric LSM2-LSM8 complex that forms a seven-membered ring structure with a donut shape. The LSm subunits are arranged in the order lsm8, lsm2, lsm3, lsm6, lsm5, lsm7 and lsm4.

It localises to the cytoplasm. It is found in the nucleus. Its function is as follows. Component of LSm protein complexes, which are involved in RNA processing and may function in a chaperone-like manner. Component of the cytoplasmic LSM1-LSM7 complex which is involved in mRNA degradation by activating the decapping step. The LSM1-LSM7 complex loads onto the 3'-end of single stranded RNA. Component of the nuclear LSM2-LSM8 complex, which is involved in spliceosome assembly. The LSM2-LSM8 complex plays a role in the biogenesis of the spliceosomal U4/U6-U5 tri-snRNP complex by accelerating prp24-mediated annealing of U4/U6 di-snRNA. The LSM2-LSM8 complex binds U6 snRNA terminating with a cyclic 2',3' phosphate group; RNA with an unmodified 3' hydroxyl or non-cyclic 3' phosphate is bound less tightly. The protein is LSM complex subunit lsm7 (lsm7) of Schizosaccharomyces pombe (strain 972 / ATCC 24843) (Fission yeast).